Here is a 462-residue protein sequence, read N- to C-terminus: Flavin-containing monooxygenase FMO GS-OX3 (462 aa).

17–22 (GAGPAG) contacts FAD. 212–217 (GNFASG) contacts NADP(+). The chain crosses the membrane as a helical span at residues 318–338 (ALAPGLAFVGLPAMGIVFVMF).

It belongs to the FMO family.

It localises to the membrane. It carries out the reaction a (Z)-omega-(methylsulfanyl)-N-sulfo-alkylhydroximate S-glucoside + NADPH + O2 + H(+) = a (Z)-omega-(methylsulfinyl)-alkyl-glucosinolate + NADP(+) + H2O. Catalyzes the conversion of methylthioalkyl glucosinolates of any chain length into methylsulfinylalkyl glucosinolates. Prefers probably short-chain methylthioalkyl glucosinolates in cv. Landsberg erecta. The sequence is that of Flavin-containing monooxygenase FMO GS-OX3 (FMOGS-OX3) from Arabidopsis thaliana (Mouse-ear cress).